A 1002-amino-acid chain; its full sequence is Glutamate receptor ionotropic, NMDA 3B (1002 aa).

The signal sequence occupies residues 1–24; the sequence is MESVRTLWLSVALALAVGSRVVRG. At 25–574 the chain is on the extracellular side; it reads HPQPCRVPTR…PIGAFMWPLH (550 aa). Residues Asn69, Asn212, Asn344, Asn451, and Asn465 are each glycosylated (N-linked (GlcNAc...) asparagine). 2 disulfide bridges follow: Cys439-Cys475 and Cys445-Cys476. Ser531, Ser533, and Arg538 together coordinate glycine. D-serine is bound by residues Ser533 and Arg538. Residues 575–594 form a helical membrane-spanning segment; sequence WSMWVGVFAALHLTALFLTL. Over 595–615 the chain is Cytoplasmic; the sequence is YEWRSPYGLTPRGRNRGTVFS. Residues 616 to 627 constitute an intramembrane region (discontinuously helical); the sequence is YSSALNLCYAIL. Topologically, residues 628-641 are cytoplasmic; sequence FGRTVSSKTPKCPT. The helical transmembrane segment at 642–661 threads the bilayer; sequence GRFLMNLWAIFCLLVLSSYT. Residues 662–832 lie on the Extracellular side of the membrane; sequence ANLAAVMVGD…TLQMGVYHFS (171 aa). Residue Ser701 coordinates glycine. D-serine is bound by residues Ser701, Ala702, and Asp745. A glycine-binding site is contributed by Asp745. Residue Asn786 is glycosylated (N-linked (GlcNAc...) asparagine). A helical membrane pass occupies residues 833-848; that stretch reads GLFVLLCLGLGSALLT. Residues 849-1002 lie on the Cytoplasmic side of the membrane; that stretch reads SLGEHVFYRL…RLLHAAPAES (154 aa). Positions 882-910 are disordered; it reads ALNTGPPEGQQERAEQERSGPKDELPATD. Positions 891–906 are enriched in basic and acidic residues; the sequence is QQERAEQERSGPKDEL. Positions 944–985 form a coiled coil; sequence LCSNGPGLQAELRELELRIEAARERLRSALLRRGELRALLGD. Residues 951–984 are involved in the trafficking and surface expression of NMDARs; the sequence is LQAELRELELRIEAARERLRSALLRRGELRALLG.

Belongs to the glutamate-gated ion channel (TC 1.A.10.1) family. NR3B/GRIN3B subfamily. Forms heterotetrameric channels that contain at least two GluN1 subunits and at least a combination of one GluN2 and one GluN3 subunits (in vitro). Forms heterotetrameric channels composed of two GluN1/zeta subunits (GRIN1), and two identical GluN3 subunits (GRIN3A or GRIN3B) (in vitro). Does not form functional homomeric channels. As to expression, expressed in the hippocampus, the corpus callosum, in the facial and trigeminal nuclei of the brainstem and the ventral horn of the spinal cord.

Its subcellular location is the cell membrane. The protein localises to the postsynaptic cell membrane. The enzyme catalyses Ca(2+)(in) = Ca(2+)(out). It carries out the reaction Na(+)(in) = Na(+)(out). With respect to regulation, excitatory glycine receptors are inhibited by D-serine at a concentrion of 100uM. Functionally, component of a non-conventional N-methyl-D-aspartate (NMDA) receptors (NMDARs) that function as heterotetrameric, ligand-gated cation channels with low calcium permeability and low voltage-dependent block by Mg(2+). Forms glutamatergic receptor complexes with GluN1 and GluN2 subunits which are activated by glycine binding to the GluN1 and GluN3 subunits and L-glutamate binding to GluN2 subunits. Forms excitatory glycinergic receptor complexes with GluN1 alone which are activated by glycine binding to the GluN1 and GluN3 subunits. GluN3B subunit also binds D-serine and, in the absence of glycine, activates glycinergic receptor complexes, but with lower efficacy than glycine. Each GluN3 subunit confers differential attributes to channel properties, including activation, deactivation and desensitization kinetics, pH sensitivity, Ca2(+) permeability, and binding to allosteric modulators. In Rattus norvegicus (Rat), this protein is Glutamate receptor ionotropic, NMDA 3B.